A 1349-amino-acid chain; its full sequence is Aldehyde oxidase 2 (1349 aa).

Residues 8–96 enclose the 2Fe-2S ferredoxin-type domain; the sequence is DELVFFVNGR…GAAVTTVEGV (89 aa). The [2Fe-2S] cluster site is built by Cys47, Cys52, Cys55, and Cys78. Gln117 provides a ligand contact to Mo-molybdopterin. [2Fe-2S] cluster contacts are provided by Cys118, Cys121, Cys153, and Cys155. Cys155 serves as a coordination point for Mo-molybdopterin. Positions 240-425 constitute an FAD-binding PCMH-type domain; sequence FYGERVTWIS…ESVHIPHSQK (186 aa). FAD-binding positions include 268-275, Ala349, Ser358, His362, Asp371, and Leu415; that span reads LVVGNTSL. Residues 816–817, 1098–1101, Gln1213, and Leu1278 each bind Mo-molybdopterin; these read GF and ASVG. The active-site Proton acceptor; for azaheterocycle hydroxylase activity is Glu1280.

Belongs to the xanthine dehydrogenase family. Homodimer. Requires [2Fe-2S] cluster as cofactor. FAD serves as cofactor. Mo-molybdopterin is required as a cofactor. Only detected at very few levels in nasal mucosa.

It is found in the cytoplasm. The catalysed reaction is an aldehyde + O2 + H2O = a carboxylate + H2O2 + H(+). Its function is as follows. Oxidase with broad substrate specificity, oxidizing aromatic azaheterocycles, such as phthalazine, as well as aldehydes, such as benzaldehyde and retinal. This is Aldehyde oxidase 2 (AOX2) from Macaca fascicularis (Crab-eating macaque).